Consider the following 1582-residue polypeptide: Alpha-2-macroglobulin (1582 aa).

Positions 1–15 (MICLAALAVAVPARA) are cleaved as a signal peptide. A cross-link (isoglutamyl cysteine thioester (Cys-Gln)) is located at residues 1080–1083 (CAEQ).

This sequence belongs to the protease inhibitor I39 (alpha-2-macroglobulin) family. Bacterial alpha-2-macroglobulin subfamily.

In terms of biological role, protects the bacterial cell from host peptidases. The chain is Alpha-2-macroglobulin from Ralstonia nicotianae (strain ATCC BAA-1114 / GMI1000) (Ralstonia solanacearum).